A 219-amino-acid polypeptide reads, in one-letter code: Ribose-5-phosphate isomerase A (219 aa).

Residues 28–31 (TGST), 81–84 (DGAD), and 94–97 (KGGG) each bind substrate. Catalysis depends on Glu-103, which acts as the Proton acceptor. Lys-121 serves as a coordination point for substrate.

It belongs to the ribose 5-phosphate isomerase family. As to quaternary structure, homodimer.

The enzyme catalyses aldehydo-D-ribose 5-phosphate = D-ribulose 5-phosphate. It functions in the pathway carbohydrate degradation; pentose phosphate pathway; D-ribose 5-phosphate from D-ribulose 5-phosphate (non-oxidative stage): step 1/1. In terms of biological role, catalyzes the reversible conversion of ribose-5-phosphate to ribulose 5-phosphate. The chain is Ribose-5-phosphate isomerase A from Acidithiobacillus ferrooxidans (strain ATCC 23270 / DSM 14882 / CIP 104768 / NCIMB 8455) (Ferrobacillus ferrooxidans (strain ATCC 23270)).